Here is a 523-residue protein sequence, read N- to C-terminus: MSQQVIIFDTTLRDGEQALQASLSVKEKLQIALALERMGVDVMEVGFPVSSPGDFESVQTIARQVKNSRVCALARCVEKDIDVAAESLKVAEAFRIHTFIATSPMHIATKLRSTLDEVIERAIYMVKRARNYTDDVEFSCEDAGRTPIADLARVVEAAINAGATTINIPDTVGYTMPFEFAGIISGLYERVPNIDKAIISVHTHDDLGLAVGNSLAAVHAGARQVEGAMNGIGERAGNCSLEEVIMAIKVRKDILNVHTAINHQEIWRTSQLVSQICNMPIPANKAIVGSSAFAHSSGIHQDGVLKNRENYEIMTPESIGLNQIQLNLTSRSGRAAVKHRMDEMGYKESEYNLDNLYDAFLKLADKKGQVFDYDLEALAFIGKQQEEPEHFRLDYFSVQSGSNDIATAAVKLACGEEVKAEAANGNGPVDAVYQAINRITDYNVELVKYSLTAKGHGKDALGQVDIVANYNGRRFHGVGLATDIVESSAKAMVHVLNNIWRAAEVEKELQRKAQHNENNKETV.

The region spanning Val-5–Trp-267 is the Pyruvate carboxyltransferase domain. The Mn(2+) site is built by Asp-14, His-202, His-204, and Asn-238. Positions Arg-392–Val-523 are regulatory domain.

It belongs to the alpha-IPM synthase/homocitrate synthase family. LeuA type 1 subfamily. Homodimer. The cofactor is Mn(2+).

Its subcellular location is the cytoplasm. It catalyses the reaction 3-methyl-2-oxobutanoate + acetyl-CoA + H2O = (2S)-2-isopropylmalate + CoA + H(+). It participates in amino-acid biosynthesis; L-leucine biosynthesis; L-leucine from 3-methyl-2-oxobutanoate: step 1/4. Functionally, catalyzes the condensation of the acetyl group of acetyl-CoA with 3-methyl-2-oxobutanoate (2-ketoisovalerate) to form 3-carboxy-3-hydroxy-4-methylpentanoate (2-isopropylmalate). This chain is 2-isopropylmalate synthase, found in Shigella sonnei (strain Ss046).